A 134-amino-acid chain; its full sequence is Glycine cleavage system H protein (134 aa).

Positions 24 to 106 constitute a Lipoyl-binding domain; sequence TVRVGITDYA…YGAGWLLDIQ (83 aa). Position 65 is an N6-lipoyllysine (K65).

The protein belongs to the GcvH family. In terms of assembly, the glycine cleavage system is composed of four proteins: P, T, L and H. Requires (R)-lipoate as cofactor.

Functionally, the glycine cleavage system catalyzes the degradation of glycine. The H protein shuttles the methylamine group of glycine from the P protein to the T protein. This is Glycine cleavage system H protein from Mycobacterium tuberculosis (strain ATCC 25177 / H37Ra).